The primary structure comprises 477 residues: Glycogen synthase (477 aa).

Lys15 is a binding site for ADP-alpha-D-glucose.

Belongs to the glycosyltransferase 1 family. Bacterial/plant glycogen synthase subfamily.

The enzyme catalyses [(1-&gt;4)-alpha-D-glucosyl](n) + ADP-alpha-D-glucose = [(1-&gt;4)-alpha-D-glucosyl](n+1) + ADP + H(+). Its pathway is glycan biosynthesis; glycogen biosynthesis. In terms of biological role, synthesizes alpha-1,4-glucan chains using ADP-glucose. The polypeptide is Glycogen synthase (Clostridium acetobutylicum (strain ATCC 824 / DSM 792 / JCM 1419 / IAM 19013 / LMG 5710 / NBRC 13948 / NRRL B-527 / VKM B-1787 / 2291 / W)).